Consider the following 78-residue polypeptide: Large ribosomal subunit protein bL28 (78 aa).

The tract at residues 1–20 (MSRVCQVTGKGPVTGNNISH) is disordered.

It belongs to the bacterial ribosomal protein bL28 family.

The sequence is that of Large ribosomal subunit protein bL28 from Pseudomonas putida (strain ATCC 700007 / DSM 6899 / JCM 31910 / BCRC 17059 / LMG 24140 / F1).